Reading from the N-terminus, the 215-residue chain is MADLSPAPALREGGPRAHRPSAPSPPPRSRSTSEPEEAELSLSLARTKTRSYGSTASVRAPLGARVIERHVEHRVRAGDTLQGIALKYGVTMEQIKRANKLFTNDCIFLKKTLSIPILSEKPLLFNGLNSIDSPESETVDSSFCQEEEPVVSEEELPPPSPQDPDPKPAQPEEVSARDFLQRLDLQIKLSTQAARKLKEESRDEESPYAASLYHS.

A disordered region spans residues 1–40; the sequence is MADLSPAPALREGGPRAHRPSAPSPPPRSRSTSEPEEAEL. Residue Ala2 is modified to N-acetylalanine. Residues Ser5, Ser24, Ser33, and Ser57 each carry the phosphoserine modification. Residues 71–115 form the LysM domain; the sequence is VEHRVRAGDTLQGIALKYGVTMEQIKRANKLFTNDCIFLKKTLSI. 2 disordered regions span residues 135 to 176 and 195 to 215; these read ESET…EVSA and RKLKEESRDEESPYAASLYHS. Residues 145–156 show a composition bias toward acidic residues; the sequence is QEEEPVVSEEEL. The segment covering 157 to 169 has biased composition (pro residues); that stretch reads PPPSPQDPDPKPA. Positions 196–205 are enriched in basic and acidic residues; that stretch reads KLKEESRDEE.

The chain is LysM and putative peptidoglycan-binding domain-containing protein 2 (Lysmd2) from Mus musculus (Mouse).